Reading from the N-terminus, the 143-residue chain is uncharacterized protein (143 aa).

To E.coli YifN.

This is an uncharacterized protein from Haemophilus influenzae (strain ATCC 51907 / DSM 11121 / KW20 / Rd).